The sequence spans 588 residues: Protein kintoun (588 aa).

Disordered stretches follow at residues 199-223 (PGYE…PENS), 338-498 (PPLE…SSQE), and 510-535 (AANV…ADED). Residues 202-212 (EAKEPPEERDL) show a composition bias toward basic and acidic residues. Residues 350-361 (PNPTSDPQNENQ) show a composition bias toward polar residues. Basic and acidic residues-rich tracts occupy residues 362-382 (TRVE…HQRG) and 393-433 (QVLE…KFEL). The span at 435 to 447 (DVQQENKGNCSNT) shows a compositional bias: polar residues. The span at 448–460 (KEVKCCRRTKDSL) shows a compositional bias: basic and acidic residues.

It belongs to the PIH1 family. Kintoun subfamily.

The protein localises to the cytoplasm. It is found in the dynein axonemal particle. Functionally, required for cytoplasmic pre-assembly of axonemal dyneins, thereby playing a central role in motility in cilia and flagella. Involved in pre-assembly of dynein arm complexes in the cytoplasm before intraflagellar transport loads them for the ciliary compartment. This Oryzias latipes (Japanese rice fish) protein is Protein kintoun.